Consider the following 413-residue polypeptide: BEN domain-containing protein 7 (413 aa).

Glycyl lysine isopeptide (Lys-Gly) (interchain with G-Cter in SUMO2) cross-links involve residues lysine 16, lysine 56, and lysine 85. A compositionally biased stretch (basic and acidic residues) spans 78-88 (GKEGEKLKEEP). Disordered stretches follow at residues 78 to 153 (GKEG…GELP) and 208 to 243 (RTAV…MEKK). Composition is skewed to polar residues over residues 99-111 (LNSS…SLHP) and 121-153 (PPQS…GELP). The segment covering 211-222 (VSRKRNKKKKVP) has biased composition (basic residues). Low complexity predominate over residues 223-232 (PKTVEPLTVK). Residue lysine 243 forms a Glycyl lysine isopeptide (Lys-Gly) (interchain with G-Cter in SUMO2) linkage. Positions 287–392 (GFDVFMPKSQ…IKLARRRLKR (106 aa)) constitute a BEN domain. Threonine 324 carries the phosphothreonine modification. Serine 328 carries the post-translational modification Phosphoserine.

This Homo sapiens (Human) protein is BEN domain-containing protein 7 (BEND7).